The following is a 65-amino-acid chain: Sec-independent protein translocase protein TatA (65 aa).

Residues 1 to 21 (MFGLGGQELVLILLIILLLFG) traverse the membrane as a helical segment.

It belongs to the TatA/E family. In terms of assembly, forms a complex with TatC.

Its subcellular location is the cell inner membrane. Its function is as follows. Part of the twin-arginine translocation (Tat) system that transports large folded proteins containing a characteristic twin-arginine motif in their signal peptide across membranes. TatA could form the protein-conducting channel of the Tat system. The protein is Sec-independent protein translocase protein TatA of Chlorobium phaeobacteroides (strain DSM 266 / SMG 266 / 2430).